The chain runs to 374 residues: Ferroptosis suppressor protein 1 (374 aa).

G2 carries N-myristoyl glycine lipidation. Residues 13–35 form a helical membrane-spanning segment; sequence VVIVGGGFAGIAAATQLKSFGIP. Residues 17-21, R53, and V81 each bind 6-hydroxy-FAD; that span reads GGGFA. K167 carries the N6-acetyllysine modification. Residue D285 coordinates 6-hydroxy-FAD.

This sequence belongs to the FAD-dependent oxidoreductase family. 6-hydroxy-FAD serves as cofactor. N-myristoylation at Gly-2 mediates the recruitment to lipid droplets and plasma membrane. In terms of processing, acetylation at Lys-167 prevents AIFM2 ubiquitination and degradation, thereby inhibiting ferroptosis. KAT2B mediates acetylation at Lys-167, while HDAC3 removes it. Post-translationally, ubiquitinated. AIFM2 undergoes 'Lys-29'-ubiquitination and proteasomal degradation, which is inhibited by acetylation at Lys-167.

The protein localises to the lipid droplet. It localises to the cell membrane. It is found in the cytoplasm. Its subcellular location is the mitochondrion membrane. The protein resides in the nucleus. It catalyses the reaction ubiquinone-10 + NADH + H(+) = ubiquinol-10 + NAD(+). The enzyme catalyses phylloquinone + NADH + H(+) = phylloquinol + NAD(+). It carries out the reaction menaquinone-4 + NADH + H(+) = menaquinol-4 + NAD(+). The catalysed reaction is menadione + NADH + H(+) = menadiol + NAD(+). With respect to regulation, the modification by 4-hydroxy-2-nonenal (HNE) adduction in mitochondria results in loss of the oxidoreductase activity and activation of a novel function in mitochondrial oxidative stress signaling. An NAD(P)H-dependent oxidoreductase that acts as a key inhibitor of ferroptosis. At the plasma membrane, catalyzes reduction of coenzyme Q/ubiquinone-10 to ubiquinol-10, a lipophilic radical-trapping antioxidant that prevents lipid oxidative damage and consequently ferroptosis. Acts in parallel to GPX4 to suppress phospholipid peroxidation and ferroptosis. This anti-ferroptotic function is independent of cellular glutathione levels. Also acts as a potent radical-trapping antioxidant by mediating warfarin-resistant vitamin K reduction in the canonical vitamin K cycle: catalyzes NAD(P)H-dependent reduction of vitamin K (phylloquinone, menaquinone-4 and menadione) to hydroquinone forms. Hydroquinones act as potent radical-trapping antioxidants inhibitor of phospholipid peroxidation and ferroptosis. May play a role in mitochondrial stress signaling. Upon oxidative stress, associates with the lipid peroxidation end product 4-hydroxy-2-nonenal (HNE) forming a lipid adduct devoid of oxidoreductase activity, which then translocates from mitochondria into the nucleus triggering DNA damage and cell death. In Xenopus tropicalis (Western clawed frog), this protein is Ferroptosis suppressor protein 1 (aifm2).